Here is a 285-residue protein sequence, read N- to C-terminus: MTALLIDGNALSKTLRAQAAERAAALTARGHQPGLAVILVGANPASEVYVRNKIKACEDNGFFSLKDAYPATLSEADLLARIDELNRDPKIHGILVQLPLPAHIDSHKVIEAIAPEKDVDGFHVANAGALMTGKPLFRPCTPYGVMKMFEAHGIALQGANAVVIGRSNIVGKPMAMMLLDAGATVTICHSKTRDLAAHTREADIVVAAVGKRNILTADMVKPGATVIDVGMNRDDAGKLCGDVDFAGAKEVAGYITPVPGGVGPMTITMLLINTIESAERAAAAA.

Residues 165–167 (GRS) and serine 190 contribute to the NADP(+) site.

It belongs to the tetrahydrofolate dehydrogenase/cyclohydrolase family. As to quaternary structure, homodimer.

It catalyses the reaction (6R)-5,10-methylene-5,6,7,8-tetrahydrofolate + NADP(+) = (6R)-5,10-methenyltetrahydrofolate + NADPH. It carries out the reaction (6R)-5,10-methenyltetrahydrofolate + H2O = (6R)-10-formyltetrahydrofolate + H(+). The protein operates within one-carbon metabolism; tetrahydrofolate interconversion. Functionally, catalyzes the oxidation of 5,10-methylenetetrahydrofolate to 5,10-methenyltetrahydrofolate and then the hydrolysis of 5,10-methenyltetrahydrofolate to 10-formyltetrahydrofolate. The protein is Bifunctional protein FolD of Burkholderia orbicola (strain AU 1054).